We begin with the raw amino-acid sequence, 156 residues long: N-glycosidase Npun_R5314 (156 aa).

It belongs to the YbiA family.

The enzyme catalyses 2,5-diamino-6-hydroxy-4-(5-phosphoribosylamino)-pyrimidine + H2O = 2,5,6-triamino-4-hydroxypyrimidine + D-ribose 5-phosphate. The catalysed reaction is 5-amino-6-(5-phospho-D-ribosylamino)uracil + H2O = 5,6-diaminouracil + D-ribose 5-phosphate. Catalyzes the hydrolysis of the N-glycosidic bond in the first two intermediates of riboflavin biosynthesis, which are highly reactive metabolites, yielding relatively innocuous products. Thus, can divert a surplus of harmful intermediates into relatively harmless products and pre-empt the damage these intermediates would otherwise do. May act on other substrates in vivo. Has no activity against GTP, nucleoside monophosphates or ADP-ribose. This Nostoc punctiforme (strain ATCC 29133 / PCC 73102) protein is N-glycosidase Npun_R5314.